Consider the following 61-residue polypeptide: MITALTALLVLISLALVVTVPVALATPGEWESSKDQFNKAFQLWVGLVVAIATADGISSSI.

A run of 2 helical transmembrane segments spans residues 5 to 25 (LTAL…VALA) and 38 to 58 (NKAF…DGIS).

Belongs to the PsbZ family. In terms of assembly, PSII is composed of 1 copy each of membrane proteins PsbA, PsbB, PsbC, PsbD, PsbE, PsbF, PsbH, PsbI, PsbJ, PsbK, PsbL, PsbM, PsbT, PsbX, PsbY, PsbZ, Psb30/Ycf12, at least 3 peripheral proteins of the oxygen-evolving complex and a large number of cofactors. It forms dimeric complexes.

It is found in the plastid. Its subcellular location is the chloroplast thylakoid membrane. In terms of biological role, may control the interaction of photosystem II (PSII) cores with the light-harvesting antenna, regulates electron flow through the 2 photosystem reaction centers. PSII is a light-driven water plastoquinone oxidoreductase, using light energy to abstract electrons from H(2)O, generating a proton gradient subsequently used for ATP formation. This is Photosystem II reaction center protein Z from Skeletonema costatum (Marine centric diatom).